Consider the following 428-residue polypeptide: Neuromedin-U receptor 1 (428 aa).

The Extracellular portion of the chain corresponds to 1 to 59 (MTPPCLNCSIFPGALSPNASRSPLVCNISEFKWPYQPEDLNLTDEALRLKYLGPQQMKQ). N-linked (GlcNAc...) asparagine glycans are attached at residues asparagine 27 and asparagine 41. The helical transmembrane segment at 60–80 (FVPICVTYLLIFVVGTLGNGL) threads the bilayer. Residues 81 to 96 (TCTVILRNKTMRTPTN) lie on the Cytoplasmic side of the membrane. A helical transmembrane segment spans residues 97–117 (FYLFSLAVSDMLVLLVGLPLE). At 118-137 (LYEMQQNYPFQLGASACYFR) the chain is on the extracellular side. Cysteine 134 and cysteine 219 are joined by a disulfide. A helical membrane pass occupies residues 138–158 (ILLLETVCLASVLNVTALSVE). Residues 159-181 (RYVAVVRPLQAKSVMTRAHVRRM) lie on the Cytoplasmic side of the membrane. A helical membrane pass occupies residues 182–202 (VGAIWVLATLFSLPNTSLHGL). Over 203-235 (SQLTVPCRGPVPDSAICSLVGPMDFYKLVVLTT) the chain is Extracellular. The helical transmembrane segment at 236-256 (ALLFFCLPMVTISVLYLLIGL) threads the bilayer. The Cytoplasmic portion of the chain corresponds to 257–294 (RLRRERMLLQVEVKGRKTAATQETSHRRIQLQDRGRRQ). A helical transmembrane segment spans residues 295–315 (VTKMLFALVVVFGICWAPFHA). Residues 316–339 (DRIMWSLVYGHSTEGLHLAYQCVH) lie on the Extracellular side of the membrane. A helical transmembrane segment spans residues 340–360 (IASGIFFYLGSAANPVLYSLM). At 361–428 (STRFRETFLQ…PGCQQETDPS (68 aa)) the chain is on the cytoplasmic side.

It belongs to the G-protein coupled receptor 1 family. In terms of tissue distribution, ubiquitously expressed.

Its subcellular location is the cell membrane. In terms of biological role, receptor for the neuromedin-U and neuromedin-S neuropeptides. This is Neuromedin-U receptor 1 (Nmur1) from Mus musculus (Mouse).